The primary structure comprises 203 residues: Large ribosomal subunit protein uL13 (203 aa).

An N-acetylalanine modification is found at Ala2. The residue at position 59 (Arg59) is a Citrulline. Ser77 bears the Phosphoserine mark. Arg140 carries the post-translational modification Citrulline. The residue at position 191 (Lys191) is an N6-acetyllysine.

This sequence belongs to the universal ribosomal protein uL13 family. In terms of assembly, component of the 60S ribosome. Component of the GAIT complex. Interacts with EIF4G1. Post-translationally, phosphorylation at Ser-77 upon interferon-gamma treatment in macrophages involves a DAPK1-DAPK3 kinase cascade and is causing release from the ribosome, association with the GAIT complex and subsequent involvement in transcript-selective translation inhibition. In terms of processing, citrullinated by PADI4.

It localises to the cytoplasm. Functionally, associated with ribosomes but is not required for canonical ribosome function and has extra-ribosomal functions. Component of the GAIT (gamma interferon-activated inhibitor of translation) complex which mediates interferon-gamma-induced transcript-selective translation inhibition in inflammation processes. Upon interferon-gamma activation and subsequent phosphorylation dissociates from the ribosome and assembles into the GAIT complex which binds to stem loop-containing GAIT elements in the 3'-UTR of diverse inflammatory mRNAs (such as ceruplasmin) and suppresses their translation. In the GAIT complex interacts with m7G cap-bound eIF4G at or near the eIF3-binding site and blocks the recruitment of the 43S ribosomal complex. Involved in methylation of rRNA. This is Large ribosomal subunit protein uL13 (Rpl13a) from Rattus norvegicus (Rat).